The following is a 247-amino-acid chain: Agamous-like MADS-box protein AGL28 (247 aa).

The MADS-box domain occupies 6–66 (LGRRKIELVK…GKAYSFGHPN (61 aa)). Positions 91–168 (TKLRIQMLNE…VDEKVAQLHH (78 aa)) form a coiled coil.

In terms of tissue distribution, expressed in roots, leaves and shoot apices.

It is found in the nucleus. In terms of biological role, probable transcription factor that may function as a floral promoter operating upstream of known floral activators in the autonomous pathway. In Arabidopsis thaliana (Mouse-ear cress), this protein is Agamous-like MADS-box protein AGL28.